A 259-amino-acid polypeptide reads, in one-letter code: Ribonuclease PH (259 aa).

Phosphate-binding positions include Arg-88 and 126–128 (GTR).

Belongs to the RNase PH family. Homohexameric ring arranged as a trimer of dimers.

It carries out the reaction tRNA(n+1) + phosphate = tRNA(n) + a ribonucleoside 5'-diphosphate. Phosphorolytic 3'-5' exoribonuclease that plays an important role in tRNA 3'-end maturation. Removes nucleotide residues following the 3'-CCA terminus of tRNAs; can also add nucleotides to the ends of RNA molecules by using nucleoside diphosphates as substrates, but this may not be physiologically important. Probably plays a role in initiation of 16S rRNA degradation (leading to ribosome degradation) during starvation. The sequence is that of Ribonuclease PH from Mycobacterium ulcerans (strain Agy99).